Consider the following 152-residue polypeptide: Heavy metal-associated isoprenylated plant protein 20 (152 aa).

One can recognise an HMA domain in the interval 27–90 (MQTVNIKVKM…RIERTGKKAE (64 aa)). Cys-38 and Cys-41 together coordinate Cd(2+). Cys-149 bears the Cysteine methyl ester mark. Residue Cys-149 is the site of S-farnesyl cysteine attachment. A propeptide spans 150 to 152 (TVM) (removed in mature form).

It belongs to the HIPP family. As to quaternary structure, interacts with ZHD11/HB29. Expressed in roots, shoot apical meristem, leaves and flowers.

It localises to the membrane. Functionally, heavy-metal-binding protein. Binds cadmium. May be involved in cadmium transport and play a role in cadmium detoxification. This Arabidopsis thaliana (Mouse-ear cress) protein is Heavy metal-associated isoprenylated plant protein 20.